A 347-amino-acid polypeptide reads, in one-letter code: GMP reductase (347 aa).

Position 108–131 (108–131 (ADFEKTKQILDLNPALNFVCIDVA)) interacts with NADP(+). Positions 181 and 183 each coordinate K(+). The active-site Thioimidate intermediate is cysteine 186. 216–239 (IVSDGGCTTPGDVAKAFGGGADFV) is an NADP(+) binding site.

This sequence belongs to the IMPDH/GMPR family. GuaC type 1 subfamily. In terms of assembly, homotetramer.

The catalysed reaction is IMP + NH4(+) + NADP(+) = GMP + NADPH + 2 H(+). Its function is as follows. Catalyzes the irreversible NADPH-dependent deamination of GMP to IMP. It functions in the conversion of nucleobase, nucleoside and nucleotide derivatives of G to A nucleotides, and in maintaining the intracellular balance of A and G nucleotides. In Escherichia coli O139:H28 (strain E24377A / ETEC), this protein is GMP reductase.